The sequence spans 554 residues: Eukaryotic translation initiation factor 3 subunit D-2 (554 aa).

Residues 116–149 form a disordered region; it reads RGNAAIGGGQGGAGGTGGAGVGNKYGKGRDMRRG. The span at 120–140 shows a compositional bias: gly residues; that stretch reads AIGGGQGGAGGTGGAGVGNKY. The RNA gate stretch occupies residues 291 to 305; that stretch reads QFDLLTVNETALEPP. The disordered stretch occupies residues 532 to 554; that stretch reads FDSDGNDDEETSDDRPFLKSLGN.

It belongs to the eIF-3 subunit D family. Component of the eukaryotic translation initiation factor 3 (eIF-3) complex. The eIF-3 complex interacts with pix.

It is found in the cytoplasm. Its function is as follows. mRNA cap-binding component of the eukaryotic translation initiation factor 3 (eIF-3) complex, which is involved in protein synthesis of a specialized repertoire of mRNAs and, together with other initiation factors, stimulates binding of mRNA and methionyl-tRNAi to the 40S ribosome. The eIF-3 complex specifically targets and initiates translation of a subset of mRNAs involved in cell proliferation. In the eIF-3 complex, eif3d specifically recognizes and binds the 7-methylguanosine cap of a subset of mRNAs. The sequence is that of Eukaryotic translation initiation factor 3 subunit D-2 from Drosophila virilis (Fruit fly).